The following is a 296-amino-acid chain: Large ribosomal subunit protein uL18B (296 aa).

The segment at 251–296 (PVHEKKPKKEVKKKRWNRAKLSLEQKKDRVAQKKASFLRAQEKADS) is disordered. Positions 255 to 268 (KKPKKEVKKKRWNR) are enriched in basic residues. Over residues 271-281 (LSLEQKKDRVA) the composition is skewed to basic and acidic residues.

This sequence belongs to the universal ribosomal protein uL18 family. In terms of assembly, component of the large ribosomal subunit (LSU). Part of a LSU subcomplex, the 5S RNP which is composed of the 5S RNA, RPL5 and RPL11.

It localises to the cytoplasm. Its subcellular location is the nucleus. The protein resides in the nucleolus. Functionally, component of the ribosome, a large ribonucleoprotein complex responsible for the synthesis of proteins in the cell. The small ribosomal subunit (SSU) binds messenger RNAs (mRNAs) and translates the encoded message by selecting cognate aminoacyl-transfer RNA (tRNA) molecules. The large subunit (LSU) contains the ribosomal catalytic site termed the peptidyl transferase center (PTC), which catalyzes the formation of peptide bonds, thereby polymerizing the amino acids delivered by tRNAs into a polypeptide chain. The nascent polypeptides leave the ribosome through a tunnel in the LSU and interact with protein factors that function in enzymatic processing, targeting, and the membrane insertion of nascent chains at the exit of the ribosomal tunnel. As part of the 5S RNP/5S ribonucleoprotein particle it is an essential component of the LSU, required for its formation and the maturation of rRNAs. It also couples ribosome biogenesis to p53/TP53 activation. As part of the 5S RNP it accumulates in the nucleoplasm and inhibits MDM2, when ribosome biogenesis is perturbed, mediating the stabilization and the activation of TP53. In Xenopus laevis (African clawed frog), this protein is Large ribosomal subunit protein uL18B (rpl5-b).